The chain runs to 513 residues: MGAAAKLAFAVFLISCSSGAILGRSETQECLFFNANWERDRTNQTGVEPCYGDKDKRRHCFATWKNISGSIEIVKQGCWLDDINCYDRTDCIEKKDSPEVYFCCCEGNMCNEKFSYFPEMEVTQPTSNPVTPKPPYYNILLYSLVPLMLIAGIVICAFWVYRHHKMAYPPVLVPTQDPGPPPPSPLLGLKPLQLLEVKARGRFGCVWKAQLLNEYVAVKIFPIQDKQSWQNEYEVYSLPGMKHENILQFIGAEKRGTSVDVDLWLITAFHEKGSLSDFLKANVVSWNELCHIAETMARGLAYLHEDIPGLKDGHKPAISHRDIKSKNVLLKNNLTACIADFGLALKFEAGKSAGDTHGQVGTRRYMAPEVLEGAINFQRDAFLRIDMYAMGLVLWELASRCTAADGPVDEYMLPFEEEIGQHPSLEDMQEVVVHKKKRPVLRDYWQKHAGMAMLCETIEECWDHDAEARLSAGCVGERITQMQRLTNIITTEDIVTVVTMVTNVDFPPKESSL.

The N-terminal stretch at 1–19 (MGAAAKLAFAVFLISCSSG) is a signal peptide. At 20-135 (AILGRSETQE…TSNPVTPKPP (116 aa)) the chain is on the extracellular side. 5 cysteine pairs are disulfide-bonded: Cys-30/Cys-60, Cys-50/Cys-78, Cys-85/Cys-104, Cys-91/Cys-103, and Cys-105/Cys-110. Asn-43 and Asn-66 each carry an N-linked (GlcNAc...) asparagine glycan. Residues 136 to 161 (YYNILLYSLVPLMLIAGIVICAFWVY) form a helical membrane-spanning segment. Topologically, residues 162–513 (RHHKMAYPPV…VDFPPKESSL (352 aa)) are cytoplasmic. In terms of domain architecture, Protein kinase spans 192-485 (LQLLEVKARG…GERITQMQRL (294 aa)). Residues 198–206 (KARGRFGCV) and Lys-219 contribute to the ATP site. Residue Asp-322 is the Proton acceptor of the active site.

The protein belongs to the protein kinase superfamily. TKL Ser/Thr protein kinase family. TGFB receptor subfamily. As to quaternary structure, part of a complex consisting of MAGI2/ARIP1, ACVR2A, ACVR1B and SMAD3. Interacts with MAGI2/ARIP1. Interacts with type I receptor ACVR1. Interacts with BMP7. Interacts with TSC22D1/TSC-22. Interacts with activin A/INHBA. Mg(2+) is required as a cofactor. Requires Mn(2+) as cofactor. Brain, testis, intestine, liver and kidney.

It is found in the cell membrane. It catalyses the reaction L-threonyl-[receptor-protein] + ATP = O-phospho-L-threonyl-[receptor-protein] + ADP + H(+). The enzyme catalyses L-seryl-[receptor-protein] + ATP = O-phospho-L-seryl-[receptor-protein] + ADP + H(+). In terms of biological role, on ligand binding, forms a receptor complex consisting of two type II and two type I transmembrane serine/threonine kinases. Type II receptors phosphorylate and activate type I receptors which autophosphorylate, then bind and activate SMAD transcriptional regulators. Receptor for activin A, activin B and inhibin A. Mediates induction of adipogenesis by GDF6. This is Activin receptor type-2A from Mus musculus (Mouse).